Here is a 220-residue protein sequence, read N- to C-terminus: MAREKIRIKKIDNITARQVTFSKRRRGIFKKADELSVLCDADVALIIFSATGKLFEFSSSRMRDILGRYSLHASNINKLMDPPSTHLRLENCNLSRLSKEVEDKTKQLRKLRGEDLDGLNLEELQRLEKLLESGLSRVSEKKGECVMSQIFSLEKRGSELVDENKRLRDKLETLERAKLTTLKEALETESVTTNVSSYDSGTPLEDDSDTSLKLGLPSWE.

In terms of domain architecture, MADS-box spans Met1–Arg61. A K-box domain is found at Leu87–Ala177. Residues Ser190 to Ser200 show a composition bias toward polar residues. Residues Ser190–Glu220 are disordered.

Interacts with IMK3/MRLK. Forms a homodimer and heterodimer with SOC1, AP1 and SVP through MADS-box domain. Interacts with the SEU-LUG corepressor complex when complexed to AP1. Interacts with AGL15 and AGL16. In terms of processing, phosphorylated by IMK3. Induced by vernalization. As to expression, mostly expressed in shoot apical meristems, including floral meristems. Also detected in stems, seedlings, leaves, flowers and siliques, and, to a lower extent, in roots.

The protein localises to the nucleus. The protein resides in the cytoplasm. Functionally, transcription activator that mediates floral transition in response to vernalization. Promotes inflorescence fate in apical meristems. Acts in a dosage-dependent manner. Probably involved in the transduction of RLK-mediated signaling (e.g. IMK3 pathway). Together with AP1 and SVP, controls the identity of the floral meristem and regulates expression of class B, C and E genes. When associated with SOC1, mediates effect of gibberellins on flowering under short-day conditions, and regulates the expression of LEAFY (LFY), which links floral induction and floral development. Confers inflorescence characteristics to floral primordia and early flowering. The protein is MADS-box protein AGL24 (AGL24) of Arabidopsis thaliana (Mouse-ear cress).